Consider the following 289-residue polypeptide: Pyridoxal kinase PdxY (289 aa).

Residues S9 and 44–45 (TQ) each bind substrate. Residues D112, A144, E149, K183, and 210–213 (RPLV) contribute to the ATP site. D225 serves as a coordination point for substrate.

Belongs to the pyridoxine kinase family. PdxY subfamily. In terms of assembly, homodimer. Requires Mg(2+) as cofactor.

It carries out the reaction pyridoxal + ATP = pyridoxal 5'-phosphate + ADP + H(+). It participates in cofactor metabolism; pyridoxal 5'-phosphate salvage; pyridoxal 5'-phosphate from pyridoxal: step 1/1. Its function is as follows. Pyridoxal kinase involved in the salvage pathway of pyridoxal 5'-phosphate (PLP). Catalyzes the phosphorylation of pyridoxal to PLP. The polypeptide is Pyridoxal kinase PdxY (Proteus mirabilis).